A 464-amino-acid chain; its full sequence is Protein transport protein HofB homolog (464 aa).

Residue 264 to 271 (GPTGSGKS) coordinates ATP.

Belongs to the GSP E family.

In Haemophilus influenzae (strain ATCC 51907 / DSM 11121 / KW20 / Rd), this protein is Protein transport protein HofB homolog (hofB).